Consider the following 372-residue polypeptide: Ubiquitin carboxyl-terminal hydrolase 12 (372 aa).

Positions 39–371 constitute a USP domain; that stretch reads FGLVNFGNTC…SGYILFYQSR (333 aa). Cysteine 48 acts as the Nucleophile in catalysis. The tract at residues 150-169 is disordered; that stretch reads NGRLANGSLDSQNHNSNAPP. The span at 157-166 shows a compositional bias: polar residues; sequence SLDSQNHNSN. Zn(2+) contacts are provided by cysteine 188, cysteine 191, cysteine 235, and cysteine 238. Histidine 319 serves as the catalytic Proton acceptor.

It belongs to the peptidase C19 family. USP12/USP46 subfamily. In terms of assembly, interacts with WDR48.

It carries out the reaction Thiol-dependent hydrolysis of ester, thioester, amide, peptide and isopeptide bonds formed by the C-terminal Gly of ubiquitin (a 76-residue protein attached to proteins as an intracellular targeting signal).. Its function is as follows. Deubiquitinating enzyme. Has almost no deubiquitinating activity by itself and requires the interaction with wdr48 to have a high activity. This is Ubiquitin carboxyl-terminal hydrolase 12 (usp12) from Salmo salar (Atlantic salmon).